Reading from the N-terminus, the 186-residue chain is Large ribosomal subunit protein uL5 (186 aa).

The protein belongs to the universal ribosomal protein uL5 family. Part of the 50S ribosomal subunit; contacts the 5S rRNA and probably tRNA. Forms a bridge to the 30S subunit in the 70S ribosome.

Its function is as follows. This is one of the proteins that bind and probably mediate the attachment of the 5S RNA into the large ribosomal subunit, where it forms part of the central protuberance. In the 70S ribosome it contacts protein S13 of the 30S subunit (bridge B1b), connecting the 2 subunits; this bridge is implicated in subunit movement. May contact the P site tRNA; the 5S rRNA and some of its associated proteins might help stabilize positioning of ribosome-bound tRNAs. The sequence is that of Large ribosomal subunit protein uL5 from Methanopyrus kandleri (strain AV19 / DSM 6324 / JCM 9639 / NBRC 100938).